Consider the following 511-residue polypeptide: Putative thymidine phosphorylase (511 aa).

Belongs to the thymidine/pyrimidine-nucleoside phosphorylase family. Type 2 subfamily.

It carries out the reaction thymidine + phosphate = 2-deoxy-alpha-D-ribose 1-phosphate + thymine. The sequence is that of Putative thymidine phosphorylase from Polaromonas sp. (strain JS666 / ATCC BAA-500).